A 156-amino-acid polypeptide reads, in one-letter code: Endoribonuclease YbeY (156 aa).

Positions 122, 126, and 132 each coordinate Zn(2+).

Belongs to the endoribonuclease YbeY family. It depends on Zn(2+) as a cofactor.

The protein localises to the cytoplasm. In terms of biological role, single strand-specific metallo-endoribonuclease involved in late-stage 70S ribosome quality control and in maturation of the 3' terminus of the 16S rRNA. In Bacillus cereus (strain ATCC 10987 / NRS 248), this protein is Endoribonuclease YbeY.